A 148-amino-acid chain; its full sequence is Putative pre-16S rRNA nuclease (148 aa).

The protein belongs to the YqgF nuclease family.

It is found in the cytoplasm. Its function is as follows. Could be a nuclease involved in processing of the 5'-end of pre-16S rRNA. The sequence is that of Putative pre-16S rRNA nuclease from Chlamydia muridarum (strain MoPn / Nigg).